The chain runs to 349 residues: Ion-translocating oxidoreductase complex subunit D (349 aa).

Helical transmembrane passes span 36 to 56, 77 to 99, and 124 to 144; these read CAFF…VALS, SAML…WMIV, and AMAA…SWIA. Thr185 carries the post-translational modification FMN phosphoryl threonine. Helical transmembrane passes span 212–232, 239–259, 265–285, 291–311, and 315–335; these read GTGV…LVLL, WHIS…GFLL, ASPL…FIAT, ATSP…VYVI, and GGYP…APFI.

The protein belongs to the NqrB/RnfD family. The complex is composed of six subunits: RnfA, RnfB, RnfC, RnfD, RnfE and RnfG. It depends on FMN as a cofactor.

The protein localises to the cell inner membrane. Part of a membrane-bound complex that couples electron transfer with translocation of ions across the membrane. This chain is Ion-translocating oxidoreductase complex subunit D, found in Shewanella sp. (strain MR-4).